A 183-amino-acid chain; its full sequence is MIKLFSLKQQKKEEESAGGTKGSSKKASAAQLRIQKDINELNLPKTCDISFSDPDDLLNFKLVICPDEGFYKSGKFVFSFKVGQGYPHDPPKVKCETMVYHPNIDLEGNVCLNILREDWKPVLTINSIIYGLQYLFLEPNPEDPLNKEAAEVLQNNRRLFEQNVQRSMRGGYIGSTYFERCLK.

Met1 carries the post-translational modification N-acetylmethionine. Positions Met1–Ala29 are disordered. The interaction with UBA3 stretch occupies residues Met1 to Leu57. Residue Lys3 is modified to N6-acetyllysine. The region spanning Ala29–Ile173 is the UBC core domain. Position 50 is a phosphoserine (Ser50). Cys111 acts as the Glycyl thioester intermediate in catalysis. Position 169 is an asymmetric dimethylarginine; alternate (Arg169). The residue at position 169 (Arg169) is an Omega-N-methylarginine; alternate.

It belongs to the ubiquitin-conjugating enzyme family. UBC12 subfamily. As to quaternary structure, interacts with UBA3 and RBX1. Interacts (N-terminally acetylated form) with (via DCUN1 domain) DCUN1D1, DCUN1D2, DCUN1D3, DCUN1D4 and DCUN1D5. In terms of processing, the acetylation of Met-1 increases affinity for DCUN1D1 by about 2 orders of magnitude and is crucial for NEDD8 transfer to cullins.

The enzyme catalyses [E1 NEDD8-activating enzyme]-S-[NEDD8 protein]-yl-L-cysteine + [E2 NEDD8-conjugating enzyme]-L-cysteine = [E1 NEDD8-activating enzyme]-L-cysteine + [E2 NEDD8-conjugating enzyme]-S-[NEDD8-protein]-yl-L-cysteine.. It functions in the pathway protein modification; protein neddylation. Functionally, accepts the ubiquitin-like protein NEDD8 from the UBA3-NAE1 E1 complex and catalyzes its covalent attachment to other proteins. The specific interaction with the E3 ubiquitin ligase RBX1, but not RBX2, suggests that the RBX1-UBE2M complex neddylates specific target proteins, such as CUL1, CUL2, CUL3 and CUL4. Involved in cell proliferation. This is NEDD8-conjugating enzyme Ubc12 (Ube2m) from Mus musculus (Mouse).